Reading from the N-terminus, the 4660-residue chain is Low-density lipoprotein receptor-related protein 2 (4660 aa).

Positions 1–25 (MERGAAAAAWMLLLAIAACLAPVSG) are cleaved as a signal peptide. Topologically, residues 26-4425 (QECGSGNFRC…LSRGIPPGTT (4400 aa)) are extracellular. 7 LDL-receptor class A domains span residues 27–63 (ECGSGNFRCDNGYCIPASWRCDGTRDCLDDTDEIGCP), 66–104 (SCGSGFFLCPAEGTCIPSSWVCDQDKDCSDGADEQQNCP), 107–143 (TCSSQQLTCSNGQCVPIEYRCDHVSDCPDGSDERNCY), 146–180 (TCDQLTCANGACYNTSQKCDHKVDCRDSSDEANCT), 182–218 (LCSQKEFQCGSGECILRAYVCDHDNDCEDNSDEHNCN), 221–257 (TCGGHQFTCSNGQCINQNWVCDGDDDCQDSGDEDGCE), and 264–307 (TCYP…RYCG). Cystine bridges form between Cys-28–Cys-40, Cys-35–Cys-53, Cys-47–Cys-62, Cys-67–Cys-80, Cys-74–Cys-93, Cys-87–Cys-103, Cys-108–Cys-120, Cys-115–Cys-133, Cys-127–Cys-142, Cys-147–Cys-157, Cys-152–Cys-170, Cys-164–Cys-179, Cys-183–Cys-195, Cys-190–Cys-208, Cys-202–Cys-217, Cys-222–Cys-234, Cys-229–Cys-247, Cys-241–Cys-256, Cys-265–Cys-278, Cys-272–Cys-291, and Cys-285–Cys-306. 2 N-linked (GlcNAc...) asparagine glycosylation sites follow: Asn-159 and Asn-178. N-linked (GlcNAc...) asparagine glycans are attached at residues Asn-299, Asn-340, Asn-387, and Asn-462. 4 LDL-receptor class B repeats span residues 435-477 (HRVF…DWIN), 478-520 (NKLY…DPTV), 521-567 (GYLF…DLVS), and 568-612 (KRVY…FEEH). Asn-657 carries N-linked (GlcNAc...) asparagine glycosylation. LDL-receptor class B repeat units lie at residues 752–794 (STIF…DWIS), 795–836 (RNLY…HPAA), 837–880 (GYMF…DWST), and 881–924 (SRLY…FKDN). Residue Asn-865 is glycosylated (N-linked (GlcNAc...) asparagine). The LDL-receptor class A 8 domain maps to 1024-1060 (QCGSSSFPCNNGKCVPSIFRCDGVDDCHDNSDEHQCG). 3 cysteine pairs are disulfide-bonded: Cys-1025–Cys-1037, Cys-1032–Cys-1050, and Cys-1044–Cys-1059. N-linked (GlcNAc...) asparagine glycosylation occurs at Asn-1063. LDL-receptor class A domains are found at residues 1065-1102 (TCSSSAFTCVHGGQCIPGQWRCDKQNDCLDGSDEQNCP), 1109-1145 (TCPPTSFTCDNHMCIPKEWVCDTDNDCSDGSDEKNCQ), 1149-1185 (TCHPTQFRCPDHRCISPLYVCDGDKDCVDGSDEAGCV), 1187-1224 (NCTSSQFKCADGSSCINSRYRCDGVYDCKDNSDEAGCP), 1230-1268 (MCHPDEFQCQGDGTCIPNTWECDGHPDCIQGSDEHNGCV), 1271-1307 (TCSPSHFLCDNGNCIYNSWVCDGDNDCRDMSDEKDCP), and 1312-1350 (HCPSSQWQCPGYSICVNLSALCDGVFDCPNGTDESPLCN). Disulfide bonds link Cys-1066–Cys-1079, Cys-1073–Cys-1092, Cys-1086–Cys-1101, Cys-1110–Cys-1122, Cys-1117–Cys-1135, Cys-1129–Cys-1144, Cys-1150–Cys-1162, Cys-1157–Cys-1175, and Cys-1169–Cys-1184. Ca(2+) contacts are provided by Trp-1127, Asp-1130, Asp-1132, Asp-1134, Asp-1140, and Glu-1141. N-linked (GlcNAc...) asparagine glycosylation occurs at Asn-1187. Disulfide bonds link Cys-1188–Cys-1201, Cys-1195–Cys-1214, Cys-1208–Cys-1223, Cys-1231–Cys-1244, Cys-1238–Cys-1257, Cys-1251–Cys-1267, Cys-1272–Cys-1284, Cys-1279–Cys-1297, Cys-1291–Cys-1306, Cys-1313–Cys-1326, Cys-1320–Cys-1339, Cys-1333–Cys-1349, Cys-1354–Cys-1365, Cys-1361–Cys-1374, Cys-1376–Cys-1389, Cys-1395–Cys-1405, Cys-1401–Cys-1414, and Cys-1416–Cys-1429. 6 residues coordinate Ca(2+): Tyr-1206, Asp-1209, Val-1211, Asp-1213, Asp-1219, and Glu-1220. Residues Asn-1328 and Asn-1341 are each glycosylated (N-linked (GlcNAc...) asparagine). An EGF-like 1 domain is found at 1350-1390 (NQDSCLHFNGGCTHRCIQGPFGATCVCPIGYQLANDTKTCE). Residue Asn-1384 is glycosylated (N-linked (GlcNAc...) asparagine). One can recognise an EGF-like 2; calcium-binding domain in the interval 1391-1430 (DVNECDIPGFCSQHCVNMRGSFRCACDPEYTLESDGRTCK). 3 N-linked (GlcNAc...) asparagine glycosylation sites follow: Asn-1451, Asn-1497, and Asn-1551. 5 LDL-receptor class B repeats span residues 1479–1521 (GRVF…DWIG), 1522–1564 (RNIY…DPRM), 1567–1610 (NVMF…DYPN), 1611–1655 (RLIY…FEDS), and 1656–1696 (VFWT…IHPS). 3 N-linked (GlcNAc...) asparagine glycosylation sites follow: Asn-1676, Asn-1733, and Asn-1811. LDL-receptor class B repeat units lie at residues 1791-1833 (QFIY…DWVS), 1834-1883 (RNIY…DPAR), 1884-1931 (GKLY…DIQE), 1932-1973 (QKLY…HGSF), 1974-2014 (LYYS…YHHR), 2108-2157 (GFIY…DWVA), 2158-2202 (GNLY…DPKH), 2203-2246 (RYLF…DHDT), 2247-2290 (GYIY…FGES), and 2291-2333 (IIWV…FDEH). N-linked (GlcNAc...) asparagine glycans are attached at residues Asn-2131, Asn-2134, Asn-2178, and Asn-2225. Asn-2396 carries N-linked (GlcNAc...) asparagine glycosylation. LDL-receptor class B repeat units lie at residues 2432 to 2478 (NRIF…DWIN), 2479 to 2519 (RRIY…DPCR), 2520 to 2563 (GYMY…DLET), 2564 to 2605 (DLLY…YGQY), and 2606 to 2647 (IYWT…VVKT). 2 N-linked (GlcNAc...) asparagine glycosylation sites follow: Asn-2488 and Asn-2548. LDL-receptor class A domains lie at 2700 to 2738 (RCNQFQFTCLNGRCISQDWKCDNDNDCGDGSDELPTVCA), 2741 to 2777 (TCRSTAFTCANGRCVPYHYRCDFYNDCGDNSDEAGCL), 2780 to 2819 (SCNSTTEFTCSNGRCIPLSYVCNGINNCHDNDTSDEKNCP), 2822 to 2861 (TCQPDFAKCQTTNICVPRAFLCDGDNDCGDGSDENPIYCA), 2864 to 2902 (TCRSNEFQCVSPHRCIPSYWFCDGEADCVDSSDEPDTCG), 2907 to 2946 (SCSANQFHCDNGRCISSSWVCDGDNDCGDMSDEDQRHHCE), 2949 to 2991 (NCSS…QNCT), 2994 to 3030 (ACSTGEFSCANGRCIRQSFRCDRRNDCGDYSDERGCS), 3033 to 3071 (PCRDDQFTCQNGQCITKLYVCDEDNDCGDGSDEQEHLCH), and 3076 to 3112 (TCPPHQFRCDNGHCIEMGTVCNHVDDCSDNSDEKGCG). Intrachain disulfides connect Cys-2701-Cys-2713, Cys-2708-Cys-2726, Cys-2720-Cys-2737, Cys-2742-Cys-2754, Cys-2749-Cys-2767, Cys-2761-Cys-2776, Cys-2781-Cys-2794, Cys-2789-Cys-2807, Cys-2801-Cys-2818, Cys-2823-Cys-2836, Cys-2830-Cys-2849, Cys-2843-Cys-2860, Cys-2865-Cys-2878, Cys-2872-Cys-2891, Cys-2885-Cys-2901, Cys-2908-Cys-2920, Cys-2915-Cys-2933, and Cys-2927-Cys-2945. Asn-2782 is a glycosylation site (N-linked (GlcNAc...) asparagine). N-linked (GlcNAc...) asparagine glycosylation occurs at Asn-2810. N-linked (GlcNAc...) asparagine glycosylation occurs at Asn-2949. 18 cysteine pairs are disulfide-bonded: Cys-2950/Cys-2967, Cys-2957/Cys-2980, Cys-2974/Cys-2990, Cys-2995/Cys-3007, Cys-3002/Cys-3020, Cys-3014/Cys-3029, Cys-3034/Cys-3046, Cys-3041/Cys-3059, Cys-3053/Cys-3070, Cys-3077/Cys-3089, Cys-3084/Cys-3102, Cys-3096/Cys-3111, Cys-3116/Cys-3128, Cys-3124/Cys-3137, Cys-3139/Cys-3152, Cys-3158/Cys-3169, Cys-3165/Cys-3178, and Cys-3180/Cys-3193. Asn-2989 is a glycosylation site (N-linked (GlcNAc...) asparagine). The EGF-like 3 domain maps to 3112-3153 (GINECQDSSISHCDHNCTDTITSFYCSCLPGYKLMSDKRTCV). Asn-3127 carries N-linked (GlcNAc...) asparagine glycosylation. The EGF-like 4; calcium-binding domain maps to 3154–3194 (DIDECKETPQLCSQKCENVIGSYICKCAPGYIREPDGKSCR). N-linked (GlcNAc...) asparagine glycans are attached at residues Asn-3213, Asn-3259, Asn-3317, and Asn-3357. LDL-receptor class B repeat units follow at residues 3241–3283 (ERLY…DWVS), 3284–3326 (RKLY…ENPR), 3335–3378 (GYVY…DYTN), 3379–3421 (DLLY…FEDT), and 3422–3462 (VFWT…LHPY). The N-linked (GlcNAc...) asparagine glycan is linked to Asn-3448. LDL-receptor class A domains are found at residues 3513–3551 (MCSSTQFLCGNNEKCIPIWWKCDGQKDCSDGSDESDLCP), 3554–3592 (FCRLGQFQCRDGNCTSPQALCNARQDCADGSDEDRVLCE), 3595–3633 (RCEANEWQCANKRCIPEYWQCDSVDDCLDNSDEDPSHCA), 3636–3674 (TCRPGQFKCNNGRCIPQSWKCDVDNDCGDYSDEPIHECM), 3679–3717 (NCDNHTEFSCKTNYRCIPQWAVCNGFDDCRDNSDEQGCE), 3720–3757 (PCHPSGDFRCGNHHCIPLRWKCDGIDDCGDNSDEESCV), 3760–3796 (ECTESEFRCADQQCIPSRWVCDQENDCGDNSDERDCE), and 3799–3835 (TCHPEHFQCTSGHCVPKALACDGRADCLDASDESACP). 24 cysteine pairs are disulfide-bonded: Cys-3514–Cys-3527, Cys-3521–Cys-3540, Cys-3534–Cys-3550, Cys-3555–Cys-3567, Cys-3562–Cys-3580, Cys-3574–Cys-3591, Cys-3596–Cys-3608, Cys-3603–Cys-3621, Cys-3615–Cys-3632, Cys-3637–Cys-3649, Cys-3644–Cys-3662, Cys-3656–Cys-3673, Cys-3680–Cys-3694, Cys-3688–Cys-3707, Cys-3701–Cys-3716, Cys-3721–Cys-3734, Cys-3729–Cys-3747, Cys-3741–Cys-3756, Cys-3761–Cys-3773, Cys-3768–Cys-3786, Cys-3780–Cys-3795, Cys-3800–Cys-3812, Cys-3807–Cys-3825, and Cys-3819–Cys-3834. N-linked (GlcNAc...) asparagine glycosylation is present at Asn-3566. A glycan (N-linked (GlcNAc...) asparagine) is linked at Asn-3682. Asn-3840 carries an N-linked (GlcNAc...) asparagine glycan. 3 consecutive LDL-receptor class A domains span residues 3843–3881 (YCPAAMFECKNHVCIQSFWICDGENDCVDGSDEEIHLCF), 3884–3923 (PCESPQRFRCDNSRCIYGHQLCNGVDDCGDGSDEKEEHCR), and 3929–3965 (PCTDTEYKCSNGNCVSQHYVCDNVDDCGDLSDETGCN). 9 cysteine pairs are disulfide-bonded: Cys-3844–Cys-3856, Cys-3851–Cys-3869, Cys-3863–Cys-3880, Cys-3885–Cys-3898, Cys-3893–Cys-3911, Cys-3905–Cys-3922, Cys-3930–Cys-3942, Cys-3937–Cys-3955, and Cys-3949–Cys-3964. Residues Asn-3969 and Asn-3980 are each glycosylated (N-linked (GlcNAc...) asparagine). The EGF-like 5; calcium-binding domain maps to 4009 to 4050 (DINECEEFGICPQSCRNSKGSYECFCVDGFKSMSTHYGERCA). 3 cysteine pairs are disulfide-bonded: Cys-4013–Cys-4023, Cys-4019–Cys-4032, and Cys-4034–Cys-4049. Asn-4070 carries N-linked (GlcNAc...) asparagine glycosylation. 3 LDL-receptor class B repeats span residues 4156–4198 (RHIY…NPKL), 4199–4242 (GLMF…DYLN), and 4244–4285 (DRIY…FEDQ). A glycan (N-linked (GlcNAc...) asparagine) is linked at Asn-4329. An EGF-like 6 domain is found at 4379–4413 (MPSPCRCMHGGSCYFDENDLPKCKCSSGYSGEYCE). Cystine bridges form between Cys-4383/Cys-4391, Cys-4385/Cys-4401, and Cys-4403/Cys-4412. A helical membrane pass occupies residues 4426–4446 (MALLLTFAMVIIVGALVLVGF). Topologically, residues 4447–4660 (FHYRKTGSLL…ANLVKEDSDV (214 aa)) are cytoplasmic. The short motif at 4454-4463 (SLLPSLPKLP) is the SH3-binding element. A PxLPxI/L motif 1; mediates interaction with ANKRA2 motif is present at residues 4457 to 4462 (PSLPKL). The short motif at 4460 to 4465 (PKLPSL) is the PxLPxI/L motif 2; mediates interaction with ANKRA2 element. Ser-4464 and Ser-4467 each carry phosphoserine. The Endocytosis signal signature appears at 4522 to 4527 (FENPMY). A disordered region spans residues 4558–4660 (QNYGRSIDPS…ANLVKEDSDV (103 aa)). Ser-4577 is modified (phosphoserine). The tract at residues 4597 to 4610 (QTTNFENPIYAEMD) is interaction with DAB2. Residues 4603 to 4606 (NPIY) carry the NPXY motif motif. An SH2-binding motif is present at residues 4606–4609 (YAEM). Positions 4619–4630 (VAPPPSPSLPAK) match the SH3-binding motif. Ser-4624 carries the phosphoserine modification. Over residues 4627 to 4636 (LPAKASKRSS) the composition is skewed to low complexity. Thr-4637 is modified (phosphothreonine). A Phosphoserine modification is found at Ser-4658.

Belongs to the LDLR family. Binds plasminogen, extracellular matrix components, plasminogen activator-plasminogen activator inhibitor type I complex, apolipoprotein E-enriched beta-VLDL, lipoprotein lipase, lactoferrin, CLU/clusterin and calcium. Forms a multimeric complex together with LRPAP1. Interacts (via PxLPxI/L motif) with ANKRA2 (via ankyrin repeats). Interacts with LRP2BP. Interacts (via NPXY motif) with DAB2; the interaction is not affected by tyrosine phosphorylation of the NPXY motif. Interacts with MB. Interacts with BMP4. Interacts with the Sonic hedgehog protein N-product which is the active product of SHH. Interacts with CST3 in a calcium-dependent manner. Interacts with the vitamin-D binding protein GC/DBP. Interacts with sex hormone-binding protein SHBG. Interacts with angiotensin-2. Also interacts with angiotensin 1-7. Interacts with APOM. Interacts with selenoprotein SEPP1. Interacts with LEP. Interacts with ALB. Interacts with the antiapoptotic protein BIRC5/survivin. Interacts with matrix metalloproteinase MMP2 in complex with metalloproteinase inhibitor TIMP1. In neurons, forms a trimeric complex with APP and APPB1/FE65. Interacts with LDLRAP1/ARH; mediates trafficking of LRP2 to the endocytic recycling compartment. Does not interact with beta-amyloid protein 40 alone but interacts with the complex composed of beta-amyloid protein 40 and CLU/APOJ. Interacts with MDK. In terms of processing, a fraction undergoes proteolytic cleavage of the extracellular domain at the cell membrane to generate a cytoplasmic tail fragment. This is internalized into the early endosome from where it trafficks in an LDLRAP1/ARH-dependent manner to the endocytic recycling compartment (ERC). In the ERC, it is further cleaved by gamma-secretase to release a fragment which translocates to the nucleus and mediates transcriptional repression. N-glycosylation is required for ligand binding. Contains core-fucosylated N-glycans in kidney proximal convoluted tubules (PCTs) and hybrid-type N-glycans in proximal straight tubules (PSTs). Interacts with ligands in a glycoform-dependent manner. Retinol-binding protein and the vitamin D carrier GC/DBP are endocytosed primarily by PCTs, albumin is endocytosed equally by PCTs and PSTs, and the aminoglycoside kanamycin is endocytosed primarily by PSTs. In the inner ear, strongly expressed in the marginal cells of the stria vascularis (at protein level). In the female reproductive tract, expressed on the luminal side of the uterine epithelium (at protein level). In the adult brain, expressed in ependymal cells of the lateral ventricles where expression is restricted to the ependyma that faces the stem cell niche (at protein level). Expressed in neurons throughout the brain including in the hippocampus, limbic cortices and cerebellum (at protein level). In the developing optic nerve, expressed exclusively in astrocytes at 14.5 dpc, 16.5 dpc and 18.5 dpc (at protein level).

Its subcellular location is the apical cell membrane. It is found in the endosome lumen. The protein localises to the membrane. It localises to the coated pit. The protein resides in the cell projection. Its subcellular location is the dendrite. It is found in the axon. Functionally, multiligand endocytic receptor. Acts together with CUBN to mediate endocytosis of high-density lipoproteins. Mediates receptor-mediated uptake of polybasic drugs such as aprotinin, aminoglycosides and polymyxin B. In the kidney, mediates the tubular uptake and clearance of leptin. Also mediates transport of leptin across the blood-brain barrier through endocytosis at the choroid plexus epithelium. Endocytosis of leptin in neuronal cells is required for hypothalamic leptin signaling and leptin-mediated regulation of feeding and body weight. Mediates endocytosis and subsequent lysosomal degradation of CST3 in kidney proximal tubule cells. Mediates renal uptake of 25-hydroxyvitamin D3 in complex with the vitamin D3 transporter GC/DBP. Mediates renal uptake of metallothionein-bound heavy metals. Together with CUBN, mediates renal reabsorption of myoglobin. Mediates renal uptake and subsequent lysosomal degradation of APOM. Plays a role in kidney selenium homeostasis by mediating renal endocytosis of selenoprotein SEPP1. Mediates renal uptake of the antiapoptotic protein BIRC5/survivin which may be important for functional integrity of the kidney. Mediates renal uptake of matrix metalloproteinase MMP2 in complex with metalloproteinase inhibitor TIMP1. Mediates endocytosis of Sonic hedgehog protein N-product (ShhN), the active product of SHH. Also mediates ShhN transcytosis. In the embryonic neuroepithelium, mediates endocytic uptake and degradation of BMP4, is required for correct SHH localization in the ventral neural tube and plays a role in patterning of the ventral telencephalon. Required at the onset of neurulation to sequester SHH on the apical surface of neuroepithelial cells of the rostral diencephalon ventral midline and to control PTCH1-dependent uptake and intracellular trafficking of SHH. During neurulation, required in neuroepithelial cells for uptake of folate bound to the folate receptor FOLR1 which is necessary for neural tube closure. In the adult brain, negatively regulates BMP signaling in the subependymal zone which enables neurogenesis to proceed. In astrocytes, mediates endocytosis of ALB which is required for the synthesis of the neurotrophic factor oleic acid. Involved in neurite branching. During optic nerve development, required for SHH-mediated migration and proliferation of oligodendrocyte precursor cells. Mediates endocytic uptake and clearance of SHH in the retinal margin which protects retinal progenitor cells from mitogenic stimuli and keeps them quiescent. Plays a role in reproductive organ development by mediating uptake in reproductive tissues of androgen and estrogen bound to the sex hormone binding protein SHBG. Mediates endocytosis of angiotensin-2. Also mediates endocytosis of angiotensin 1-7. Binds to the complex composed of beta-amyloid protein 40 and CLU/APOJ and mediates its endocytosis and lysosomal degradation. Required for embryonic heart development. Required for normal hearing, possibly through interaction with estrogen in the inner ear. This Mus musculus (Mouse) protein is Low-density lipoprotein receptor-related protein 2 (Lrp2).